Here is a 463-residue protein sequence, read N- to C-terminus: Proton-coupled folate transporter (463 aa).

Over 1-27 (MVSPDDSPEIRDRPRPRRCLLPASVTV) the chain is Cytoplasmic. The helical transmembrane segment at 28-46 (EPVIFLSMFALALQGPLAT) threads the bilayer. Topologically, residues 47–86 (QYLWDRLSADIGFNGTRTVGCAMNGSKSAGPEQQEVETLT) are extracellular. Residues asparagine 60 and asparagine 70 are each glycosylated (N-linked (GlcNAc...) asparagine). Cysteine 67 and cysteine 302 are disulfide-bonded. The helical transmembrane segment at 87-112 (AHWSLYINLGGFLVGLFSVMLLGPWS) threads the bilayer. The Cytoplasmic segment spans residues 113–116 (DKVG). Residues 117–139 (RRPVLMLPCIGLALQAAVYLLVM) form a helical membrane-spanning segment. The Extracellular portion of the chain corresponds to 140-144 (YQELH). Residues 145-158 (VGYFLIGRFISGIS) form a helical membrane-spanning segment. Over 159–181 (GDFNMILAGCFAYIADVSDRQSR) the chain is Cytoplasmic. H(+) is bound by residues aspartate 160 and glutamate 189. A helical transmembrane segment spans residues 182–207 (TFRVAVLEACLGIAGMVASIIGGHWR). Residues 208–212 (KAQGY) lie on the Extracellular side of the membrane. Residues 213–231 (INPFWLVFAVNLFTALYVY) form a helical membrane-spanning segment. Residues 232 to 270 (FCVEESVKDKKPARLFTHRHYQSFFRLFTVQGENNRRRK) are Cytoplasmic-facing. A helical membrane pass occupies residues 271-293 (LFLYSLALLVVVTVHMGAKNLFV). Histidine 285 is a binding site for H(+). Residues 294-306 (LYELSYPLCWDSD) lie on the Extracellular side of the membrane. The helical transmembrane segment at 307 to 329 (LIGYGSAAEHLTYLSSLAGLRLF) threads the bilayer. The Cytoplasmic segment spans residues 330–335 (QLCLAD). Residues 336–355 (SWVAEMGFISNISGLVVISL) form a helical membrane-spanning segment. Topologically, residues 356-359 (ASTT) are extracellular. Residues 360 to 380 (PIMFTGYGLRFFAMATTPVIR) form a helical membrane-spanning segment. At 381 to 392 (SKLSKMVEEGEQ) the chain is on the cytoplasmic side. Residues 393 to 418 (GALFSSVACVEGLSFLLATGLFNSLY) form a helical membrane-spanning segment. Residues 419–426 (PATLHFMK) are Extracellular-facing. A helical transmembrane segment spans residues 427 to 445 (GFPFLLGALLLLIPAGIIG). The Cytoplasmic portion of the chain corresponds to 446–463 (LIEVCEQKPMYSQFSEIS).

The protein belongs to the major facilitator superfamily. SLC46A family. Monomer.

Its subcellular location is the cell membrane. It is found in the apical cell membrane. The protein localises to the basolateral cell membrane. It localises to the endosome membrane. The protein resides in the cytoplasm. It catalyses the reaction folate(in) + H(+)(in) = folate(out) + H(+)(out). It carries out the reaction (6S)-5-methyl-5,6,7,8-tetrahydrofolate(in) + H(+)(in) = (6S)-5-methyl-5,6,7,8-tetrahydrofolate(out) + H(+)(out). The catalysed reaction is methotrexate(in) + H(+)(in) = methotrexate(out) + H(+)(out). The enzyme catalyses pemetrexed(in) + H(+)(in) = pemetrexed(out) + H(+)(out). Proton-coupled folate symporter that mediates folate absorption using an H(+) gradient as a driving force. Involved in the intestinal absorption of folates at the brush-border membrane of the proximal jejunum, and the transport from blood to cerebrospinal fluid across the choroid plexus. Functions at acidic pH via alternate outward- and inward-open conformation states. Protonation of residues in the outward open state primes the protein for transport. Binding of folate promotes breaking of salt bridge network and subsequent closure of the extracellular gate, leading to the inward-open state and release of protons and folate. Also able to transport antifolate drugs, such as methotrexate and pemetrexed. Also acts as a lower-affinity, pH-independent heme carrier protein and constitutes the main importer of heme in the intestine. Imports heme in the retina and retinal pigment epithelium, in neurons of the hippocampus, in hepatocytes and in the renal epithelial cells. This is Proton-coupled folate transporter from Xenopus laevis (African clawed frog).